The primary structure comprises 166 residues: Glutamyl-tRNA(Gln) amidotransferase subunit C-2, mitochondrial (166 aa).

It belongs to the GatC family. In terms of assembly, subunit of the heterotrimeric GatCAB amidotransferase (AdT) complex, composed of A, B and C subunits.

It is found in the mitochondrion. The enzyme catalyses L-glutamyl-tRNA(Gln) + L-glutamine + ATP + H2O = L-glutaminyl-tRNA(Gln) + L-glutamate + ADP + phosphate + H(+). In terms of biological role, allows the formation of correctly charged Gln-tRNA(Gln) through the transamidation of misacylated Glu-tRNA(Gln) in the mitochondria. The reaction takes place in the presence of glutamine and ATP through an activated gamma-phospho-Glu-tRNA(Gln). The chain is Glutamyl-tRNA(Gln) amidotransferase subunit C-2, mitochondrial from Culex quinquefasciatus (Southern house mosquito).